Here is a 159-residue protein sequence, read N- to C-terminus: UPF0587 protein v1g245604 (159 aa).

Residues Cys33, Cys36, Cys67, and Cys70 each contribute to the Zn(2+) site.

The protein belongs to the UPF0587 family.

This Nematostella vectensis (Starlet sea anemone) protein is UPF0587 protein v1g245604.